A 1169-amino-acid polypeptide reads, in one-letter code: Chromosome partition protein Smc (1169 aa).

32 to 39 (PNGCGKSN) is a binding site for ATP. Coiled-coil stretches lie at residues 170–265 (ISKY…TGEE) and 307–481 (IRHT…ERLN). In terms of domain architecture, SMC hinge spans 525-620 (DRLGEKIEVA…CASDPAEAAE (96 aa)). 2 coiled-coil regions span residues 656–914 (ALAR…MKLA) and 985–1014 (RYLE…ECRA).

Belongs to the SMC family. Homodimer.

The protein localises to the cytoplasm. Functionally, required for chromosome condensation and partitioning. In Methylococcus capsulatus (strain ATCC 33009 / NCIMB 11132 / Bath), this protein is Chromosome partition protein Smc.